The chain runs to 178 residues: Probable chorismate pyruvate-lyase (178 aa).

Substrate-binding residues include arginine 73, leucine 111, and glutamate 163.

It belongs to the UbiC family.

The protein resides in the cytoplasm. It carries out the reaction chorismate = 4-hydroxybenzoate + pyruvate. It participates in cofactor biosynthesis; ubiquinone biosynthesis. Removes the pyruvyl group from chorismate, with concomitant aromatization of the ring, to provide 4-hydroxybenzoate (4HB) for the ubiquinone pathway. The sequence is that of Probable chorismate pyruvate-lyase from Pseudomonas aeruginosa (strain UCBPP-PA14).